A 756-amino-acid chain; its full sequence is Centromere protein I (756 aa).

Positions 1-60 are disordered; it reads MSPQKRVKNVQAQNRTSQGSSSFQTTLSAWKVKQDPSNSKNISKHGQNNPVGDYEHADDQ. Polar residues-rich tracts occupy residues 10-28 and 35-50; these read VQAQ…TTLS and DPSN…QNNP.

The protein belongs to the CENP-I/CTF3 family. As to quaternary structure, component of the CENPA-CAD complex, composed of CENPI, CENPK, CENPL, CENPO, CENPP, CENPQ, CENPR and CENPS. The CENPA-CAD complex interacts with the CENPA-NAC complex, at least composed of CENPA, CENPC, CENPH, CENPM, CENPN, CENPT and CENPU. Interacts with SENP6. Post-translationally, sumoylated. Sumoylated form can be polyubiquitinated by RNF4, leading to its degradation. Desumoylation by SENP6 prevents its degradation.

It localises to the nucleus. The protein localises to the chromosome. Its subcellular location is the centromere. Component of the CENPA-CAD (nucleosome distal) complex, a complex recruited to centromeres which is involved in assembly of kinetochore proteins, mitotic progression and chromosome segregation. May be involved in incorporation of newly synthesized CENPA into centromeres via its interaction with the CENPA-NAC complex. Required for the localization of CENPF, MAD1L1 and MAD2 (MAD2L1 or MAD2L2) to kinetochores. Involved in the response of gonadal tissues to follicle-stimulating hormone. In Homo sapiens (Human), this protein is Centromere protein I (CENPI).